Here is a 164-residue protein sequence, read N- to C-terminus: NADH-quinone oxidoreductase subunit I (164 aa).

2 consecutive 4Fe-4S ferredoxin-type domains span residues 55–84 and 95–124; these read RRYE…IEID and KVYD…MGPY. [4Fe-4S] cluster contacts are provided by Cys-64, Cys-67, Cys-70, Cys-74, Cys-104, Cys-107, Cys-110, and Cys-114.

Belongs to the complex I 23 kDa subunit family. As to quaternary structure, NDH-1 is composed of 14 different subunits. Subunits NuoA, H, J, K, L, M, N constitute the membrane sector of the complex. [4Fe-4S] cluster is required as a cofactor.

It localises to the cell inner membrane. The enzyme catalyses a quinone + NADH + 5 H(+)(in) = a quinol + NAD(+) + 4 H(+)(out). NDH-1 shuttles electrons from NADH, via FMN and iron-sulfur (Fe-S) centers, to quinones in the respiratory chain. The immediate electron acceptor for the enzyme in this species is believed to be ubiquinone. Couples the redox reaction to proton translocation (for every two electrons transferred, four hydrogen ions are translocated across the cytoplasmic membrane), and thus conserves the redox energy in a proton gradient. The chain is NADH-quinone oxidoreductase subunit I from Magnetococcus marinus (strain ATCC BAA-1437 / JCM 17883 / MC-1).